Reading from the N-terminus, the 201-residue chain is DNA polymerase epsilon subunit C (201 aa).

Disordered stretches follow at residues 102-165 and 178-201; these read KKRE…KSTR and SALD…STDP. The segment covering 117 to 144 has biased composition (acidic residues); that stretch reads VVIEEPELHEDDGVEEEEEEDEVSEEEE. Basic and acidic residues-rich tracts occupy residues 145 to 164 and 182 to 201; these read PVHN…DKST and VGEH…STDP. Phosphoserine occurs at positions 186, 188, and 189.

DNA polymerase epsilon is a heterotetramer consisting of POL2, DPB2, DPB3 and DPB4.

It is found in the nucleus. Its function is as follows. As accessory component of the DNA polymerase epsilon (DNA polymerase II) participates in chromosomal DNA replication. It is required during synthesis of the leading and lagging DNA strands at the replication fork and binds at/or near replication origins and moves along DNA with the replication fork. It has 3'-5' proofreading exonuclease activity that correct errors arising during DNA replication. It is also involved in DNA synthesis during DNA repair. The sequence is that of DNA polymerase epsilon subunit C (DPB3) from Saccharomyces cerevisiae (strain ATCC 204508 / S288c) (Baker's yeast).